A 191-amino-acid chain; its full sequence is uncharacterized protein (191 aa).

The N-terminal stretch at 1–22 (MKSLRLMLCAMPLMLTGCSTMS) is a signal peptide.

This is an uncharacterized protein from Escherichia coli (strain K12).